A 298-amino-acid polypeptide reads, in one-letter code: 4-hydroxy-tetrahydrodipicolinate synthase (298 aa).

Thr-48 is a pyruvate binding site. Tyr-137 serves as the catalytic Proton donor/acceptor. The active-site Schiff-base intermediate with substrate is Lys-166. Position 207 (Ile-207) interacts with pyruvate.

The protein belongs to the DapA family. As to quaternary structure, homotetramer; dimer of dimers.

It localises to the cytoplasm. The catalysed reaction is L-aspartate 4-semialdehyde + pyruvate = (2S,4S)-4-hydroxy-2,3,4,5-tetrahydrodipicolinate + H2O + H(+). It functions in the pathway amino-acid biosynthesis; L-lysine biosynthesis via DAP pathway; (S)-tetrahydrodipicolinate from L-aspartate: step 3/4. Functionally, catalyzes the condensation of (S)-aspartate-beta-semialdehyde [(S)-ASA] and pyruvate to 4-hydroxy-tetrahydrodipicolinate (HTPA). This is 4-hydroxy-tetrahydrodipicolinate synthase from Campylobacter lari (strain RM2100 / D67 / ATCC BAA-1060).